A 693-amino-acid chain; its full sequence is Elongation factor G (693 aa).

One can recognise a tr-type G domain in the interval 9 to 283; sequence ERVRNIGIIA…AVCDYLPSPL (275 aa). Residues 18 to 25, 82 to 86, and 136 to 139 contribute to the GTP site; these read AHIDAGKT, DTPGH, and NKMD.

Belongs to the TRAFAC class translation factor GTPase superfamily. Classic translation factor GTPase family. EF-G/EF-2 subfamily.

It localises to the cytoplasm. Functionally, catalyzes the GTP-dependent ribosomal translocation step during translation elongation. During this step, the ribosome changes from the pre-translocational (PRE) to the post-translocational (POST) state as the newly formed A-site-bound peptidyl-tRNA and P-site-bound deacylated tRNA move to the P and E sites, respectively. Catalyzes the coordinated movement of the two tRNA molecules, the mRNA and conformational changes in the ribosome. In Dehalococcoides mccartyi (strain ATCC BAA-2100 / JCM 16839 / KCTC 5957 / BAV1), this protein is Elongation factor G.